Here is a 159-residue protein sequence, read N- to C-terminus: Globin C, coelomic (159 aa).

Gly2 is subject to N-acetylglycine. One can recognise a Globin domain in the interval 12–158; the sequence is DLTLAQKKIV…VQAVLLVKHG (147 aa). 2 residues coordinate heme b: His74 and His105.

It belongs to the globin family. As to quaternary structure, monomer.

This Molpadia arenicola (Sea cucumber) protein is Globin C, coelomic.